The chain runs to 546 residues: Fusion glycoprotein F0 (546 aa).

An N-terminal signal peptide occupies residues 1–19 (MRIPLAALIAMTIPCLATG). The Extracellular segment spans residues 20–491 (QIHWGNLSKI…NIKGVSVTNT (472 aa)). N-linked (GlcNAc...) asparagine; by host glycans are attached at residues asparagine 25, asparagine 57, and asparagine 63. The interval 109 to 133 (FAGVVLAGAALGVATAAQITAGIAL) is fusion peptide. The stretch at 134-162 (HQSMMNSQAIESLKASLVTTNQAIEEIRQ) forms a coiled coil. 3 disulfides stabilise this stretch: cysteine 354–cysteine 362, cysteine 386–cysteine 391, and cysteine 393–cysteine 416. A coiled-coil region spans residues 458-483 (DLGNAVTKLERAKDLLDSSDLILKNI). The chain crosses the membrane as a helical span at residues 492–512 (GYILIGVGLIAVVGIIIVTCC). The Cytoplasmic segment spans residues 513 to 546 (CKKSSSDSRASTVVLNPGLKPDLTGTSKSYIRSL).

The protein belongs to the paramyxoviruses fusion glycoprotein family. As to quaternary structure, homotrimer of disulfide-linked F1-F2. Post-translationally, the inactive precursor F0 is glycosylated and proteolytically cleaved into F1 and F2 to be functionally active. The cleavage is mediated by cellular proteases during the transport and maturation of the polypeptide.

The protein localises to the virion membrane. The protein resides in the host cell membrane. In terms of biological role, class I viral fusion protein. Under the current model, the protein has at least 3 conformational states: pre-fusion native state, pre-hairpin intermediate state, and post-fusion hairpin state. During viral and plasma cell membrane fusion, the heptad repeat (HR) regions assume a trimer-of-hairpins structure, positioning the fusion peptide in close proximity to the C-terminal region of the ectodomain. The formation of this structure appears to drive apposition and subsequent fusion of viral and plasma cell membranes. Directs fusion of viral and cellular membranes leading to delivery of the nucleocapsid into the cytoplasm. This fusion is pH independent and occurs directly at the outer cell membrane. The trimer of F1-F2 (F protein) probably interacts with HN at the virion surface. Upon HN binding to its cellular receptor, the hydrophobic fusion peptide is unmasked and interacts with the cellular membrane, inducing the fusion between cell and virion membranes. Later in infection, F proteins expressed at the plasma membrane of infected cells could mediate fusion with adjacent cells to form syncytia, a cytopathic effect that could lead to tissue necrosis. The protein is Fusion glycoprotein F0 (F) of Bos indicus (Zebu).